Here is a 335-residue protein sequence, read N- to C-terminus: Lipoyl synthase (335 aa).

[4Fe-4S] cluster is bound by residues cysteine 55, cysteine 60, cysteine 66, cysteine 81, cysteine 85, cysteine 88, and serine 292. Residues 67–281 enclose the Radical SAM core domain; the sequence is WEDREATFLI…SQRAEEIGFQ (215 aa).

Belongs to the radical SAM superfamily. Lipoyl synthase family. Requires [4Fe-4S] cluster as cofactor.

The protein resides in the cytoplasm. It catalyses the reaction [[Fe-S] cluster scaffold protein carrying a second [4Fe-4S](2+) cluster] + N(6)-octanoyl-L-lysyl-[protein] + 2 oxidized [2Fe-2S]-[ferredoxin] + 2 S-adenosyl-L-methionine + 4 H(+) = [[Fe-S] cluster scaffold protein] + N(6)-[(R)-dihydrolipoyl]-L-lysyl-[protein] + 4 Fe(3+) + 2 hydrogen sulfide + 2 5'-deoxyadenosine + 2 L-methionine + 2 reduced [2Fe-2S]-[ferredoxin]. Its pathway is protein modification; protein lipoylation via endogenous pathway; protein N(6)-(lipoyl)lysine from octanoyl-[acyl-carrier-protein]: step 2/2. In terms of biological role, catalyzes the radical-mediated insertion of two sulfur atoms into the C-6 and C-8 positions of the octanoyl moiety bound to the lipoyl domains of lipoate-dependent enzymes, thereby converting the octanoylated domains into lipoylated derivatives. The protein is Lipoyl synthase of Micrococcus luteus (strain ATCC 4698 / DSM 20030 / JCM 1464 / CCM 169 / CCUG 5858 / IAM 1056 / NBRC 3333 / NCIMB 9278 / NCTC 2665 / VKM Ac-2230) (Micrococcus lysodeikticus).